The primary structure comprises 855 residues: uncharacterized protein (855 aa).

10 helical membrane passes run 24–44, 256–276, 318–338, 361–381, 404–424, 430–450, 487–507, 725–745, 780–800, and 821–841; these read PFQYILLVLGIALGVAMIVAI, AFTVNLTALSLIALLVGIFLI, IGTGLGLLIGIWLGEGLIGLV, LLKGLIIGIFAAMLATLPPAI, LMPWLWVAWFGLGSFGVLMLW, LVVAFVGLFSVLIALALIAPP, IAIAALMMAVSLMVGVSISVG, ITIALQLVATVVAFIGVLSAL, MGGMAGLMALPTGCILAWILV, and FLRALLVAVVAALAAGMYPAW.

This sequence belongs to the ABC-4 integral membrane protein family. The complex is probably composed of two ATP-binding proteins (Rv0986) and two transmembrane proteins (Rv0987).

The protein localises to the cell membrane. Its function is as follows. Probably part of an ABC transporter complex involved in host cell binding either through secretion of an adherence factor or through maintaining the architecture and integrity of the mycobacterial cell envelope. Could be required for host endothelial-cell invasion and/or intracellular survival. This is an uncharacterized protein from Mycobacterium tuberculosis (strain ATCC 25618 / H37Rv).